The primary structure comprises 715 residues: Polyribonucleotide nucleotidyltransferase (715 aa).

The Mg(2+) site is built by Asp488 and Asp494. The 60-residue stretch at 555 to 614 (PRIEVMHIPTDKIRDVIGTGGKVIREIVEKTGAKINIEDDGTVKIASSNGKEIEAARKWI) folds into the KH domain. Residues 624-692 (GEIYEGTVVK…ERGKVRLSMK (69 aa)) form the S1 motif domain.

It belongs to the polyribonucleotide nucleotidyltransferase family. It depends on Mg(2+) as a cofactor.

It is found in the cytoplasm. The catalysed reaction is RNA(n+1) + phosphate = RNA(n) + a ribonucleoside 5'-diphosphate. Functionally, involved in mRNA degradation. Catalyzes the phosphorolysis of single-stranded polyribonucleotides processively in the 3'- to 5'-direction. In Chelativorans sp. (strain BNC1), this protein is Polyribonucleotide nucleotidyltransferase.